Here is a 333-residue protein sequence, read N- to C-terminus: MRRVTLTQFLIEQQRAGRTSPDLRLLIEVVARAVKAIAVNVSKGALADLLGEAGTDNVQGEAQKKLDVIANEILLQANEWGGHLAAMASEEVEEVHQIPFDYPKGGYLLLFDPLDGSSNIDVNISVGTIFSVLRFPEGIQEPNEQCFLQPGREQVAAGYALYGPSTLLILTVGNGVHGFTLDREMGSFVYTHPFMTVPVDTQEYAINASNARHWEPPVQRYVAELQQGRTGPRGKDFNMRWVASMVADVHRVLTRGGIFMYPLDEKCRDQGGKLRLMYEANPMAMIVEQAGGSATTGRQRILDVQPAKLHQRVPVILGSTHEVERVTAYHREG.

Mg(2+)-binding residues include Glu90, Asp112, Leu114, and Asp115. Substrate contacts are provided by residues 115-118, Asn207, and Lys273; that span reads DGSS. Position 279 (Glu279) interacts with Mg(2+).

The protein belongs to the FBPase class 1 family. As to quaternary structure, homotetramer. Mg(2+) serves as cofactor.

It is found in the cytoplasm. It carries out the reaction beta-D-fructose 1,6-bisphosphate + H2O = beta-D-fructose 6-phosphate + phosphate. Its pathway is carbohydrate biosynthesis; gluconeogenesis. This Aromatoleum aromaticum (strain DSM 19018 / LMG 30748 / EbN1) (Azoarcus sp. (strain EbN1)) protein is Fructose-1,6-bisphosphatase class 1.